Here is a 428-residue protein sequence, read N- to C-terminus: Glutamate-1-semialdehyde 2,1-aminomutase (428 aa).

An N6-(pyridoxal phosphate)lysine modification is found at Lys267.

This sequence belongs to the class-III pyridoxal-phosphate-dependent aminotransferase family. HemL subfamily. In terms of assembly, homodimer. Pyridoxal 5'-phosphate serves as cofactor.

It is found in the cytoplasm. It carries out the reaction (S)-4-amino-5-oxopentanoate = 5-aminolevulinate. The protein operates within porphyrin-containing compound metabolism; protoporphyrin-IX biosynthesis; 5-aminolevulinate from L-glutamyl-tRNA(Glu): step 2/2. The protein is Glutamate-1-semialdehyde 2,1-aminomutase of Flavobacterium johnsoniae (strain ATCC 17061 / DSM 2064 / JCM 8514 / BCRC 14874 / CCUG 350202 / NBRC 14942 / NCIMB 11054 / UW101) (Cytophaga johnsonae).